We begin with the raw amino-acid sequence, 239 residues long: 7-cyano-7-deazaguanine synthase (239 aa).

13–23 (FSGGQDSTTCL) lines the ATP pocket. Zn(2+) contacts are provided by cysteine 201, cysteine 216, cysteine 219, and cysteine 222.

This sequence belongs to the QueC family. It depends on Zn(2+) as a cofactor.

The catalysed reaction is 7-carboxy-7-deazaguanine + NH4(+) + ATP = 7-cyano-7-deazaguanine + ADP + phosphate + H2O + H(+). Its pathway is purine metabolism; 7-cyano-7-deazaguanine biosynthesis. Catalyzes the ATP-dependent conversion of 7-carboxy-7-deazaguanine (CDG) to 7-cyano-7-deazaguanine (preQ(0)). The protein is 7-cyano-7-deazaguanine synthase of Bradyrhizobium sp. (strain BTAi1 / ATCC BAA-1182).